The chain runs to 88 residues: Small ribosomal subunit protein bS20 (88 aa).

This sequence belongs to the bacterial ribosomal protein bS20 family.

Binds directly to 16S ribosomal RNA. The sequence is that of Small ribosomal subunit protein bS20 from Bacillus licheniformis (strain ATCC 14580 / DSM 13 / JCM 2505 / CCUG 7422 / NBRC 12200 / NCIMB 9375 / NCTC 10341 / NRRL NRS-1264 / Gibson 46).